A 346-amino-acid chain; its full sequence is Transcription termination factor 4, mitochondrial (346 aa).

A mitochondrion-targeting transit peptide spans 1 to 42; it reads MASLGRQVPEWHRLLALSWACLVRQTPHLREQKQMSPSLSCK. MTERF repeat units follow at residues 142–172, 177–204, 209–239, 245–270, and 290–318; these read FNAL…LGLG, KRVL…LREK, AQHI…YAYF, HLDI…YLER, and LRNI…VFKK. A dimerization with NSUN4 region spans residues 310 to 327; that stretch reads VEEFQVFKKLLDQEEEEE. The interval 321-346 is disordered; sequence DQEEEEESESHASEEEEEEEEEEELL. A compositionally biased stretch (acidic residues) spans 322–346; sequence QEEEEESESHASEEEEEEEEEEELL.

This sequence belongs to the mTERF family. Heterodimer with NSUN4; this interaction may be required for NSUN4 recruitment to the mitochondrial large ribosomal subunit. Widely expressed, with highest levels in liver, followed by testis, kidney and brain.

The protein localises to the mitochondrion. Functionally, regulator of mitochondrial ribosome biogenesis and translation. Binds to mitochondrial ribosomal RNAs 16S, 12S and 7S. Targets NSUN4 RNA methyltransferase to the mitochondrial large ribosomal subunit. This chain is Transcription termination factor 4, mitochondrial (Mterf4), found in Mus musculus (Mouse).